The sequence spans 82 residues: uncharacterized protein (82 aa).

2 consecutive transmembrane segments (helical) span residues 29–49 (LMNA…GIII) and 55–75 (WSLP…LTFF).

It is found in the cell membrane. This is an uncharacterized protein from Escherichia coli (strain K12).